The primary structure comprises 69 residues: Protein translocase subunit SecE (69 aa).

Residues glycine 43 to leucine 63 traverse the membrane as a helical segment.

This sequence belongs to the SecE/SEC61-gamma family. As to quaternary structure, component of the Sec protein translocase complex. Heterotrimer consisting of SecY (alpha), SecG (beta) and SecE (gamma) subunits. The heterotrimers can form oligomers, although 1 heterotrimer is thought to be able to translocate proteins. Interacts with the ribosome. May interact with SecDF, and other proteins may be involved.

Its subcellular location is the cell membrane. Functionally, essential subunit of the Sec protein translocation channel SecYEG. Clamps together the 2 halves of SecY. May contact the channel plug during translocation. This Methanococcus maripaludis (strain DSM 14266 / JCM 13030 / NBRC 101832 / S2 / LL) protein is Protein translocase subunit SecE.